The primary structure comprises 163 residues: MVDLSFNATVFMQMFHFLLMLVVLRLFAYRPLMNVIEQRQAYIADEIEAAEKQKAAAAELRSQLEADLAKAREEAKAIVARATKASDEQAQAIMEQARTEAQRLKEEALAEIGREREKAIAQLKDEVASLAVLVAAKVVKDGLTIDAQHNLVQNAIKEVGQLQ.

Residues 10–29 (VFMQMFHFLLMLVVLRLFAY) traverse the membrane as a helical segment.

The protein belongs to the ATPase B chain family. As to quaternary structure, F-type ATPases have 2 components, F(1) - the catalytic core - and F(0) - the membrane proton channel. F(1) has five subunits: alpha(3), beta(3), gamma(1), delta(1), epsilon(1). F(0) has three main subunits: a(1), b(2) and c(10-14). The alpha and beta chains form an alternating ring which encloses part of the gamma chain. F(1) is attached to F(0) by a central stalk formed by the gamma and epsilon chains, while a peripheral stalk is formed by the delta and b chains.

It localises to the cell membrane. In terms of biological role, f(1)F(0) ATP synthase produces ATP from ADP in the presence of a proton or sodium gradient. F-type ATPases consist of two structural domains, F(1) containing the extramembraneous catalytic core and F(0) containing the membrane proton channel, linked together by a central stalk and a peripheral stalk. During catalysis, ATP synthesis in the catalytic domain of F(1) is coupled via a rotary mechanism of the central stalk subunits to proton translocation. Its function is as follows. Component of the F(0) channel, it forms part of the peripheral stalk, linking F(1) to F(0). This chain is ATP synthase subunit b, found in Desulforudis audaxviator (strain MP104C).